The chain runs to 395 residues: Protein pelota (395 aa).

Residues 210–212 carry the PGF motif motif; sequence PGF. Positions 371 to 395 are disordered; the sequence is PELEDSDDDDDEDGAAGGVADSDSD. The segment covering 372 to 384 has biased composition (acidic residues); that stretch reads ELEDSDDDDDEDG.

The protein belongs to the eukaryotic release factor 1 family. Pelota subfamily. In terms of assembly, component of the Pelota-HBS1L complex, also named Dom34-Hbs1 complex, composed of pelo and HBS1. Interacts with Pink1 and Cnot4; the interaction with Cnot4 appears to be Pink1-dependent. Requires a divalent metal cation as cofactor. Expressed in ovaries and muscles (at protein level). Expressed throughout all development stages.

The protein resides in the nucleus. It is found in the cytoplasm. Component of the Pelota-HBS1L complex, a complex that recognizes stalled ribosomes and triggers the No-Go Decay (NGD) pathway. In the Pelota-HBS1L complex, pelo recognizes ribosomes stalled at the 3' end of an mRNA and engages stalled ribosomes by destabilizing mRNA in the mRNA channel. Following ribosome-binding, the Pelota-HBS1L complex promotes recruitment of pix, which drives the disassembly of stalled ribosomes, followed by degradation of damaged mRNAs as part of the NGD pathway. Required prior to the first meiotic division for spindle formation and nuclear envelope breakdown during spermatogenesis. Together with HBS1, promotes spermatid individualization during spermatogenesis. Required for ovarian germ line stem cell self-renewal and oocyte development during oogenesis. Together with HSB1, required for transposon silencing in the ovary and testis. As part of the Pink1-regulated signaling, is recruited to damaged mitochondrial and is required for recruitment of autophagy receptors and induction of mitophagy. Required for normal eye patterning and for mitotic divisions in the ovary. The chain is Protein pelota (pelo) from Drosophila melanogaster (Fruit fly).